A 158-amino-acid chain; its full sequence is Small ribosomal subunit protein uS7 (158 aa).

The protein belongs to the universal ribosomal protein uS7 family. As to quaternary structure, part of the 30S ribosomal subunit. Contacts proteins S9 and S11.

In terms of biological role, one of the primary rRNA binding proteins, it binds directly to 16S rRNA where it nucleates assembly of the head domain of the 30S subunit. Is located at the subunit interface close to the decoding center, probably blocks exit of the E-site tRNA. The sequence is that of Small ribosomal subunit protein uS7 from Phocaeicola vulgatus (strain ATCC 8482 / DSM 1447 / JCM 5826 / CCUG 4940 / NBRC 14291 / NCTC 11154) (Bacteroides vulgatus).